The primary structure comprises 179 residues: ATP synthase subunit delta (179 aa).

This sequence belongs to the ATPase delta chain family. F-type ATPases have 2 components, F(1) - the catalytic core - and F(0) - the membrane proton channel. F(1) has five subunits: alpha(3), beta(3), gamma(1), delta(1), epsilon(1). F(0) has three main subunits: a(1), b(2) and c(10-14). The alpha and beta chains form an alternating ring which encloses part of the gamma chain. F(1) is attached to F(0) by a central stalk formed by the gamma and epsilon chains, while a peripheral stalk is formed by the delta and b chains.

Its subcellular location is the cell inner membrane. In terms of biological role, f(1)F(0) ATP synthase produces ATP from ADP in the presence of a proton or sodium gradient. F-type ATPases consist of two structural domains, F(1) containing the extramembraneous catalytic core and F(0) containing the membrane proton channel, linked together by a central stalk and a peripheral stalk. During catalysis, ATP synthesis in the catalytic domain of F(1) is coupled via a rotary mechanism of the central stalk subunits to proton translocation. This protein is part of the stalk that links CF(0) to CF(1). It either transmits conformational changes from CF(0) to CF(1) or is implicated in proton conduction. This chain is ATP synthase subunit delta, found in Burkholderia multivorans (strain ATCC 17616 / 249).